Consider the following 296-residue polypeptide: 4-diphosphocytidyl-2-C-methyl-D-erythritol kinase (296 aa).

Residue K11 is part of the active site. 96–106 contacts ATP; the sequence is PVSSGLAGGSA. Residue D136 is part of the active site.

This sequence belongs to the GHMP kinase family. IspE subfamily.

The enzyme catalyses 4-CDP-2-C-methyl-D-erythritol + ATP = 4-CDP-2-C-methyl-D-erythritol 2-phosphate + ADP + H(+). The protein operates within isoprenoid biosynthesis; isopentenyl diphosphate biosynthesis via DXP pathway; isopentenyl diphosphate from 1-deoxy-D-xylulose 5-phosphate: step 3/6. Its function is as follows. Catalyzes the phosphorylation of the position 2 hydroxy group of 4-diphosphocytidyl-2C-methyl-D-erythritol. The chain is 4-diphosphocytidyl-2-C-methyl-D-erythritol kinase from Anaplasma phagocytophilum (strain HZ).